The following is a 267-amino-acid chain: Small ribosomal subunit protein uS2 (267 aa).

The disordered stretch occupies residues 222 to 267; that stretch reads GKALRDQDSEEEIQNKEQDEVSQEEKDDILDEAMNEEDFEIPEDKE. Basic and acidic residues predominate over residues 223–240; sequence KALRDQDSEEEIQNKEQD. Positions 241-267 are enriched in acidic residues; sequence EVSQEEKDDILDEAMNEEDFEIPEDKE.

This sequence belongs to the universal ribosomal protein uS2 family.

The chain is Small ribosomal subunit protein uS2 from Campylobacter hominis (strain ATCC BAA-381 / DSM 21671 / CCUG 45161 / LMG 19568 / NCTC 13146 / CH001A).